Consider the following 198-residue polypeptide: TATA-box-binding protein (198 aa).

2 tandem repeats follow at residues 14-90 and 105-181.

It belongs to the TBP family.

In terms of biological role, general factor that plays a role in the activation of archaeal genes transcribed by RNA polymerase. Binds specifically to the TATA box promoter element which lies close to the position of transcription initiation. The sequence is that of TATA-box-binding protein from Saccharolobus shibatae (strain ATCC 51178 / DSM 5389 / JCM 8931 / NBRC 15437 / B12) (Sulfolobus shibatae).